The primary structure comprises 132 residues: Fatty acid-binding protein 12 (132 aa).

A fatty acid-binding positions include R107 and 127 to 129 (RTY).

It belongs to the calycin superfamily. Fatty-acid binding protein (FABP) family. As to expression, highly expressed in adult retina and testis.

May play a role in lipid transport. The protein is Fatty acid-binding protein 12 (Fabp12) of Mus musculus (Mouse).